We begin with the raw amino-acid sequence, 752 residues long: Complement C2 (752 aa).

A signal peptide spans 1–20 (MGPLMVLFCLLFVYTGLADS). Sushi domains follow at residues 22 to 86 (PSCP…VCKP), 87 to 146 (VRCP…VCDN), and 149 to 206 (GHCP…ICRQ). Intrachain disulfides connect C24/C64, C51/C84, C89/C131, C117/C144, C151/C191, and C177/C204. N29 carries an N-linked (GlcNAc...) asparagine glycan. Residue N112 is glycosylated (N-linked (GlcNAc...) asparagine). A VWFA domain is found at 254-452 (NLYLLLDCSQ…KALHQVFEHM (199 aa)). Positions 260–264 (DCSQS) match the MIDAS-like motif motif. 2 residues coordinate Mg(2+): S262 and S264. N290 and N333 each carry an N-linked (GlcNAc...) asparagine glycan. T337 serves as a coordination point for Mg(2+). Cystine bridges form between C463/C581, C492/C508, and C584/C600. In terms of domain architecture, Peptidase S1 spans 464–744 (GVGNMSANAS…MQPWLRQHLG (281 aa)). N-linked (GlcNAc...) asparagine glycosylation is found at N467 and N471. Catalysis depends on charge relay system residues H507 and D561. N-linked (GlcNAc...) asparagine glycans are attached at residues N621 and N651. Intrachain disulfides connect C638/C665 and C675/C705. The active-site Charge relay system is the S679.

The protein belongs to the peptidase S1 family. In terms of assembly, serine protease component of the C3 convertase, also named C4bC2b, composed of the serine protease complement C2b and complement C4b. Serine protease component of the C5 convertase, also named C4bC2bC3b, composed of the serine protease complement C2b, complement C3b, as well as complement C4b. Mg(2+) serves as cofactor. The cofactor is Mn(2+). Post-translationally, cleaved and activated by different proteases depending on the complement pathway to generate complement C2a and serine protease complement C2b chains. Cleaved and activated by C1S following activation by the classical complement system. Cleaved and activated by MASP2 following activation by the lectin complement system. Cleaved and activated by GZMK following activation by the GZMK complement system.

The protein resides in the secreted. The protein localises to the cell surface. It carries out the reaction Selective cleavage of Arg-|-Ser bond in complement component C3 alpha-chain to form C3a and C3b, and Arg-|-Xaa bond in complement component C5 alpha-chain to form C5a and C5b.. Functionally, precursor of the catalytic component of the C3 and C5 convertase complexes, which are part of the complement pathway, a cascade of proteins that leads to phagocytosis and breakdown of pathogens and signaling that strengthens the adaptive immune system. Component C2 is part of the classical, lectin and GZMK complement systems. In terms of biological role, catalytic component of the complement C3 and C5 convertase complexes. Following complement activation, recruited to the surface of pathogens by complement C4b opsonin to form the C3 convertase, or C3b and C4b opsonins to form the C5 convertase. As part of the C3 convertase, cleaves and activate C3 into C3a anaphylatoxin and C3b opsonin, the next components of the complement pathways. As part of the C5 convertase, cleaves and activate C5 into C5a anaphylatoxin and C5b component of the membrane attack complex. This Gorilla gorilla gorilla (Western lowland gorilla) protein is Complement C2.